The sequence spans 320 residues: tRNA U34 carboxymethyltransferase (320 aa).

Carboxy-S-adenosyl-L-methionine is bound by residues K89, W103, K108, G128, 150–152, 179–180, M194, Y198, and R313; these read DPT and LE.

The protein belongs to the class I-like SAM-binding methyltransferase superfamily. CmoB family. Homotetramer.

It carries out the reaction carboxy-S-adenosyl-L-methionine + 5-hydroxyuridine(34) in tRNA = 5-carboxymethoxyuridine(34) in tRNA + S-adenosyl-L-homocysteine + H(+). In terms of biological role, catalyzes carboxymethyl transfer from carboxy-S-adenosyl-L-methionine (Cx-SAM) to 5-hydroxyuridine (ho5U) to form 5-carboxymethoxyuridine (cmo5U) at position 34 in tRNAs. This is tRNA U34 carboxymethyltransferase from Haemophilus ducreyi (strain 35000HP / ATCC 700724).